Here is a 227-residue protein sequence, read N- to C-terminus: Phosphoribosylformylglycinamidine synthase subunit PurQ (227 aa).

The Glutamine amidotransferase type-1 domain occupies 3–227 (FAVCVFPGSN…LMLWYSLLSD (225 aa)). The active-site Nucleophile is the Cys86. Active-site residues include His203 and Glu205.

In terms of assembly, part of the FGAM synthase complex composed of 1 PurL, 1 PurQ and 2 PurS subunits.

The protein resides in the cytoplasm. It carries out the reaction N(2)-formyl-N(1)-(5-phospho-beta-D-ribosyl)glycinamide + L-glutamine + ATP + H2O = 2-formamido-N(1)-(5-O-phospho-beta-D-ribosyl)acetamidine + L-glutamate + ADP + phosphate + H(+). It catalyses the reaction L-glutamine + H2O = L-glutamate + NH4(+). It participates in purine metabolism; IMP biosynthesis via de novo pathway; 5-amino-1-(5-phospho-D-ribosyl)imidazole from N(2)-formyl-N(1)-(5-phospho-D-ribosyl)glycinamide: step 1/2. Functionally, part of the phosphoribosylformylglycinamidine synthase complex involved in the purines biosynthetic pathway. Catalyzes the ATP-dependent conversion of formylglycinamide ribonucleotide (FGAR) and glutamine to yield formylglycinamidine ribonucleotide (FGAM) and glutamate. The FGAM synthase complex is composed of three subunits. PurQ produces an ammonia molecule by converting glutamine to glutamate. PurL transfers the ammonia molecule to FGAR to form FGAM in an ATP-dependent manner. PurS interacts with PurQ and PurL and is thought to assist in the transfer of the ammonia molecule from PurQ to PurL. The polypeptide is Phosphoribosylformylglycinamidine synthase subunit PurQ (Aquifex aeolicus (strain VF5)).